We begin with the raw amino-acid sequence, 250 residues long: Triosephosphate isomerase (250 aa).

8-10 (NWK) is a substrate binding site. Histidine 93 serves as the catalytic Electrophile. Glutamate 165 acts as the Proton acceptor in catalysis. The substrate site is built by glycine 171 and serine 211.

This sequence belongs to the triosephosphate isomerase family. In terms of assembly, homodimer.

It localises to the cytoplasm. The catalysed reaction is D-glyceraldehyde 3-phosphate = dihydroxyacetone phosphate. The protein operates within carbohydrate biosynthesis; gluconeogenesis. It participates in carbohydrate degradation; glycolysis; D-glyceraldehyde 3-phosphate from glycerone phosphate: step 1/1. Involved in the gluconeogenesis. Catalyzes stereospecifically the conversion of dihydroxyacetone phosphate (DHAP) to D-glyceraldehyde-3-phosphate (G3P). This is Triosephosphate isomerase from Malacoplasma penetrans (strain HF-2) (Mycoplasma penetrans).